A 75-amino-acid chain; its full sequence is UPF0352 protein ESA_01049 (75 aa).

The protein belongs to the UPF0352 family.

The chain is UPF0352 protein ESA_01049 from Cronobacter sakazakii (strain ATCC BAA-894) (Enterobacter sakazakii).